The following is an 839-amino-acid chain: Taste receptor type 1 member 2 (839 aa).

Positions Met1–Ala19 are cleaved as a signal peptide. Topologically, residues Glu20–Thr566 are extracellular. Residues Asn84, Asn248, Asn292, Asn312, Asn368, Asn428, Asn487, and Asn527 are each glycosylated (N-linked (GlcNAc...) asparagine). The helical transmembrane segment at Ile567–Phe587 threads the bilayer. Over Trp588–Pro602 the chain is Cytoplasmic. The helical transmembrane segment at Met603 to Gly623 threads the bilayer. Topologically, residues Pro624–Ala635 are extracellular. Residues Leu636–Val656 form a helical membrane-spanning segment. The Cytoplasmic portion of the chain corresponds to Cys657 to Ser681. The helical transmembrane segment at Met682–Leu702 threads the bilayer. At Ser703–Ser727 the chain is on the extracellular side. Residues Leu728–Met748 form a helical membrane-spanning segment. The Cytoplasmic segment spans residues Gly749 to Lys760. Residues Phe761–Ser781 form a helical membrane-spanning segment. The Extracellular portion of the chain corresponds to Ala782 to Ser784. A helical transmembrane segment spans residues Gly785–Leu805. Over Gly806–Asp839 the chain is Cytoplasmic.

Belongs to the G-protein coupled receptor 3 family. TAS1R subfamily. Forms heterodimers with TAS1R3.

Its subcellular location is the cell membrane. Its function is as follows. Putative taste receptor. TAS1R2/TAS1R3 recognizes diverse natural and synthetic sweeteners. The protein is Taste receptor type 1 member 2 (TAS1R2) of Homo sapiens (Human).